A 361-amino-acid polypeptide reads, in one-letter code: Aminomethyltransferase (361 aa).

Belongs to the GcvT family. The glycine cleavage system is composed of four proteins: P, T, L and H.

It carries out the reaction N(6)-[(R)-S(8)-aminomethyldihydrolipoyl]-L-lysyl-[protein] + (6S)-5,6,7,8-tetrahydrofolate = N(6)-[(R)-dihydrolipoyl]-L-lysyl-[protein] + (6R)-5,10-methylene-5,6,7,8-tetrahydrofolate + NH4(+). Functionally, the glycine cleavage system catalyzes the degradation of glycine. This is Aminomethyltransferase from Bacteroides thetaiotaomicron (strain ATCC 29148 / DSM 2079 / JCM 5827 / CCUG 10774 / NCTC 10582 / VPI-5482 / E50).